The chain runs to 131 residues: Phosphomevalonate dehydratase small subunit (131 aa).

The active-site Proton acceptor is the serine 62.

Belongs to the AcnX type II small subunit family. Heterodimer composed of a large subunit (PMDh-L) and a small subunit (PMDh-S).

The catalysed reaction is (R)-5-phosphomevalonate = (2E)-3-methyl-5-phosphooxypent-2-enoate + H2O. The protein operates within isoprenoid biosynthesis; isopentenyl diphosphate biosynthesis via mevalonate pathway. In terms of biological role, component of a hydro-lyase that catalyzes the dehydration of mevalonate 5-phosphate (MVA5P) to form trans-anhydromevalonate 5-phosphate (tAHMP). Involved in the archaeal mevalonate (MVA) pathway, which provides fundamental precursors for isoprenoid biosynthesis, such as isopentenyl diphosphate (IPP) and dimethylallyl diphosphate (DMAPP). This Thermococcus gammatolerans (strain DSM 15229 / JCM 11827 / EJ3) protein is Phosphomevalonate dehydratase small subunit.